The chain runs to 241 residues: ATP synthase subunit a (241 aa).

The next 5 helical transmembrane spans lie at 30–50, 91–111, 128–148, 193–213, and 214–234; these read GQVF…ISLG, FIGT…LIPW, INTT…AGLS, LVVG…VMFL, and GLFT…YYIG.

The protein belongs to the ATPase A chain family. F-type ATPases have 2 components, CF(1) - the catalytic core - and CF(0) - the membrane proton channel. CF(1) has five subunits: alpha(3), beta(3), gamma(1), delta(1), epsilon(1). CF(0) has four main subunits: a, b, b' and c.

Its subcellular location is the cellular thylakoid membrane. Its function is as follows. Key component of the proton channel; it plays a direct role in the translocation of protons across the membrane. In Prochlorococcus marinus (strain MIT 9215), this protein is ATP synthase subunit a.